The sequence spans 91 residues: MSFDRSRIPTWRQGYRYQYEPAQKGHVLLYPEGMIKLNDSAALIGGLIDGERDVAAIIAELDKQFPGVPELGEDIEQFMEVARAEHWITLA.

It belongs to the PqqD family. In terms of assembly, monomer. Interacts with PqqE.

It functions in the pathway cofactor biosynthesis; pyrroloquinoline quinone biosynthesis. Functions as a PqqA binding protein and presents PqqA to PqqE, in the pyrroloquinoline quinone (PQQ) biosynthetic pathway. This is PqqA binding protein from Pseudomonas fluorescens (strain SBW25).